Reading from the N-terminus, the 462-residue chain is Arginine biosynthesis bifunctional protein ArgJ, mitochondrial (462 aa).

The substrate site is built by T189, K215, T236, E327, N457, and S462. T236 functions as the Nucleophile in the catalytic mechanism.

The protein belongs to the ArgJ family. In terms of assembly, heterodimer of an alpha and a beta chain. Post-translationally, the alpha and beta chains are autoproteolytically processed from a single precursor protein within the mitochondrion.

The protein resides in the mitochondrion matrix. It carries out the reaction N(2)-acetyl-L-ornithine + L-glutamate = N-acetyl-L-glutamate + L-ornithine. The enzyme catalyses L-glutamate + acetyl-CoA = N-acetyl-L-glutamate + CoA + H(+). It functions in the pathway amino-acid biosynthesis; L-arginine biosynthesis; L-ornithine and N-acetyl-L-glutamate from L-glutamate and N(2)-acetyl-L-ornithine (cyclic): step 1/1. The protein operates within amino-acid biosynthesis; L-arginine biosynthesis; N(2)-acetyl-L-ornithine from L-glutamate: step 1/4. Its function is as follows. Catalyzes two activities which are involved in the cyclic version of arginine biosynthesis: the synthesis of acetylglutamate from glutamate and acetyl-CoA, and of ornithine by transacetylation between acetylornithine and glutamate. This Postia placenta (strain ATCC 44394 / Madison 698-R) (Brown rot fungus) protein is Arginine biosynthesis bifunctional protein ArgJ, mitochondrial.